The sequence spans 421 residues: MVRYISDYDLQDVDTEVFKCITDESNRQNSQLQLIASENFVSKAVLQAQGSIFTNKYAEGYPGKRYYCGCHFADIIENIAIERLCKLFGCKFANVQPHSGSQANQGVFAALLKPGDTVIGMSLDCGGHLTHGSAPSISGKWFNAVQYQVDRDTGMIDMDAIEKLALSHNPSLIIAGSSSYPRTIDFKRFREIADKVGAYLLADIAHYAGLVAAGEFPSPIEYAHVITSTTHKTLRGPRGAVIMTNHEDIYKKIQSSIFPGMQGGPLMHVIAARAVAFGEALKPEFKDYAKQIIKNSKTLVKVFQERGLNVVTGGTDSHMVVVDLRPKSVTGKDAVLALERLGIICNKNAIPFDPEKPFVTSGLRFGSAAETSRGLQEPEFEKIGHMVCDVIDSLKTTDDVRLSIEQDVIRRVKELTDTFKV.

Residues Leu123 and 127–129 each bind (6S)-5,6,7,8-tetrahydrofolate; that span reads GHL. An N6-(pyridoxal phosphate)lysine modification is found at Lys232.

Belongs to the SHMT family. As to quaternary structure, homodimer. It depends on pyridoxal 5'-phosphate as a cofactor.

The protein resides in the cytoplasm. It carries out the reaction (6R)-5,10-methylene-5,6,7,8-tetrahydrofolate + glycine + H2O = (6S)-5,6,7,8-tetrahydrofolate + L-serine. Its pathway is one-carbon metabolism; tetrahydrofolate interconversion. It participates in amino-acid biosynthesis; glycine biosynthesis; glycine from L-serine: step 1/1. Its function is as follows. Catalyzes the reversible interconversion of serine and glycine with tetrahydrofolate (THF) serving as the one-carbon carrier. This reaction serves as the major source of one-carbon groups required for the biosynthesis of purines, thymidylate, methionine, and other important biomolecules. Also exhibits THF-independent aldolase activity toward beta-hydroxyamino acids, producing glycine and aldehydes, via a retro-aldol mechanism. In Ehrlichia ruminantium (strain Gardel), this protein is Serine hydroxymethyltransferase.